A 1013-amino-acid chain; its full sequence is Adhesion G-protein coupled receptor G2 (1013 aa).

The N-terminal stretch at 1-37 (MLFSGGQYSPVGRPEEVLLIYKIFLVIICFHAILVTS) is a signal peptide. The Extracellular portion of the chain corresponds to 38 to 623 (LKENAGNSSL…TSLPPSQMMA (586 aa)). 18 N-linked (GlcNAc...) asparagine glycosylation sites follow: asparagine 44, asparagine 78, asparagine 92, asparagine 104, asparagine 128, asparagine 137, asparagine 155, asparagine 179, asparagine 187, asparagine 366, asparagine 431, asparagine 452, asparagine 457, asparagine 524, asparagine 538, asparagine 543, asparagine 547, and asparagine 593. In terms of domain architecture, GAIN-B spans 457–615 (NTTTFAAQDP…GILLDLSRTS (159 aa)). Cystine bridges form between cysteine 566/cysteine 597 and cysteine 585/cysteine 599. The GPS stretch occupies residues 566–615 (CVFWDLNRNGGRGGWSSDGCSVKEKRMNETICTCSHLTSFGILLDLSRTS). The interval 604 to 615 (SFGILLDLSRTS) is stachel. The helical transmembrane segment at 624–644 (LTFITYIGCGLSSIFLSVTLV) threads the bilayer. The Cytoplasmic portion of the chain corresponds to 645–663 (TYIAFEKIRRDYPSKILIQ). Residues 664–684 (LCAALLLLNLVFLLDSWIALY) form a helical membrane-spanning segment. Over 685-688 (NARG) the chain is Extracellular. The helical transmembrane segment at 689-709 (FCISVAVFLHYFLLVSFTWMG) threads the bilayer. Residues cysteine 690 and cysteine 774 are joined by a disulfide bond. The Cytoplasmic segment spans residues 710-733 (LEAFHMYLALVKVFNTYIRKYILK). A helical membrane pass occupies residues 734-754 (FCIVGWGIPAVVVSIVLTISP). Over 755 to 785 (DNYGIGSYGKFPNGTPDDFCWINSSVVFYIT) the chain is Extracellular. The N-linked (GlcNAc...) asparagine glycan is linked to asparagine 777. The chain crosses the membrane as a helical span at residues 786 to 806 (VVGYFCVIFLLNVSMFIVVLV). Topologically, residues 807 to 830 (QLCRIKKKKQLGAQRKTSIQDLRS) are cytoplasmic. Residues 831–851 (IAGLTFLLGITWGFAFFAWGP) traverse the membrane as a helical segment. At 852 to 853 (VN) the chain is on the extracellular side. Residue asparagine 853 is glycosylated (N-linked (GlcNAc...) asparagine). A helical membrane pass occupies residues 854 to 874 (LTFMYLFAIFNTLQGFFIFIF). Residue asparagine 864 coordinates 3beta-hydroxyandrost-5-en-17-one. Topologically, residues 875–1013 (YCAAKENVRK…RGSLHFIEQM (139 aa)) are cytoplasmic. Serine 1006 bears the Phosphoserine mark.

Belongs to the G-protein coupled receptor 2 family. Adhesion G-protein coupled receptor (ADGR) subfamily. As to quaternary structure, heterodimer of 2 chains generated by proteolytic processing; the large extracellular N-terminal fragment and the membrane-bound C-terminal fragment predominantly remain associated and non-covalently linked. Interacts with CFTR. Proteolytically cleaved into 2 subunits, an extracellular subunit and a seven-transmembrane subunit. Post-translationally, highly glycosylated. As to expression, epididymis-specific expression (at protein level). Associated with apical membranes of efferent ductule and proximal epididymal duct epithelia.

Its subcellular location is the apical cell membrane. With respect to regulation, forms a heterodimer of 2 chains generated by proteolytic processing that remain associated through non-covalent interactions mediated by the GAIN-B domain. In the inactivated receptor, the Stachel sequence (also named stalk) is embedded in the GAIN-B domain, where it adopts a beta-strand conformation. On activation, the Stachel moves into the 7 transmembrane region and adopts a twisted hook-shaped configuration that forms contacts within the receptor, leading to coupling of a G-alpha protein, which activates signaling. The cleaved GAIN-B and N-terminal domains can then dissociate from the rest of the receptor. Deoxycorticosterone (DOC) acts as an antagonist of ADGRG2. Adhesion G-protein coupled receptor (aGPCR) for steroid hormones, such as dehydroepiandrosterone (DHEA; also named 3beta-hydroxyandrost-5-en-17-one) and androstenedione. Involved in a signal transduction pathway controlling epididymal function and male fertility. Ligand binding causes a conformation change that triggers signaling via guanine nucleotide-binding proteins (G proteins) and modulates the activity of downstream effectors, such as adenylate cyclase. ADGRG2 is coupled to G(s) G proteins and mediates activation of adenylate cyclase activity. Also able to couple with G(q) G proteins in vitro. May regulate fluid exchange within epididymis. In Rattus norvegicus (Rat), this protein is Adhesion G-protein coupled receptor G2.